A 343-amino-acid polypeptide reads, in one-letter code: uncharacterized protein (343 aa).

2 disordered regions span residues 1–27 and 205–247; these read MIRE…ERMT and SGGL…SKRQ. The segment covering 16-27 has biased composition (basic and acidic residues); that stretch reads RARDSRAQERMT. Positions 219–228 are enriched in acidic residues; sequence GQDDGNTDDG. Basic and acidic residues predominate over residues 229-247; it reads NDVHQKGRGEVESKTSKRQ.

In terms of biological role, dispensable for normal development and fertility. This is an uncharacterized protein from Bos taurus (Bovine).